Consider the following 49-residue polypeptide: Large ribosomal subunit protein bL33 (49 aa).

Belongs to the bacterial ribosomal protein bL33 family.

This chain is Large ribosomal subunit protein bL33, found in Leuconostoc citreum (strain KM20).